The following is a 126-amino-acid chain: Protein ApaG (126 aa).

Positions 2–126 (NQRLSPIKVE…FSLAVPGLLH (125 aa)) constitute an ApaG domain.

This Shewanella piezotolerans (strain WP3 / JCM 13877) protein is Protein ApaG.